A 551-amino-acid chain; its full sequence is Cation/acetate symporter ActP (551 aa).

Helical transmembrane passes span 34–54 (IEAI…TYWA), 77–97 (GLAI…SALV), 104–124 (GLIY…LIAE), 150–170 (LSAC…MVGA), 184–204 (VAVV…GMLA), 207–227 (WVQI…ALMV), 263–283 (ISAL…PHIL), 304–324 (GFIG…ILLV), 356–376 (FFLG…VAGL), 406–426 (VSKI…ILFE), 430–450 (IAFM…PIIF), 469–489 (LGLL…VTIL), and 498–518 (YEYP…FFSI).

It belongs to the sodium:solute symporter (SSF) (TC 2.A.21) family.

The protein resides in the cell inner membrane. Functionally, transports acetate. This chain is Cation/acetate symporter ActP, found in Yersinia enterocolitica serotype O:8 / biotype 1B (strain NCTC 13174 / 8081).